Consider the following 91-residue polypeptide: Large ribosomal subunit protein eL43 (91 aa).

The C4-type zinc-finger motif lies at 39–60 (CSFCGKDAVRRSSVGIWKCNGC).

Belongs to the eukaryotic ribosomal protein eL43 family.

In Dictyostelium discoideum (Social amoeba), this protein is Large ribosomal subunit protein eL43 (rpl37A).